The sequence spans 339 residues: DNA-directed RNA polymerase subunit alpha (339 aa).

The interval 1-233 (MVREEVAGST…DLFLPFLHAE (233 aa)) is alpha N-terminal domain (alpha-NTD). The segment at 266–339 (GIPLNCIFID…IDLLKNKLSF (74 aa)) is alpha C-terminal domain (alpha-CTD).

This sequence belongs to the RNA polymerase alpha chain family. As to quaternary structure, in plastids the minimal PEP RNA polymerase catalytic core is composed of four subunits: alpha, beta, beta', and beta''. When a (nuclear-encoded) sigma factor is associated with the core the holoenzyme is formed, which can initiate transcription.

Its subcellular location is the plastid. It localises to the chloroplast. The catalysed reaction is RNA(n) + a ribonucleoside 5'-triphosphate = RNA(n+1) + diphosphate. In terms of biological role, DNA-dependent RNA polymerase catalyzes the transcription of DNA into RNA using the four ribonucleoside triphosphates as substrates. The protein is DNA-directed RNA polymerase subunit alpha of Psathyrostachys juncea (Russian wildrye).